The following is a 168-amino-acid chain: Cell division inhibitor SulA (168 aa).

The segment at 105–111 (ALQTGNY) is ftsZ binding.

This sequence belongs to the SulA family. In terms of assembly, interacts with FtsZ. In terms of processing, is rapidly cleaved and degraded by the Lon protease once DNA damage is repaired.

Its function is as follows. Component of the SOS system and an inhibitor of cell division. Accumulation of SulA causes rapid cessation of cell division and the appearance of long, non-septate filaments. In the presence of GTP, binds a polymerization-competent form of FtsZ in a 1:1 ratio, thus inhibiting FtsZ polymerization and therefore preventing it from participating in the assembly of the Z ring. This mechanism prevents the premature segregation of damaged DNA to daughter cells during cell division. This is Cell division inhibitor SulA from Erwinia pyrifoliae (strain DSM 12163 / CIP 106111 / Ep16/96).